Here is a 373-residue protein sequence, read N- to C-terminus: UPF0725 protein At1g23950 (373 aa).

The residue at position 2 (Thr2) is an N-acetylthreonine.

This sequence belongs to the UPF0725 (EMB2204) family.

The chain is UPF0725 protein At1g23950 from Arabidopsis thaliana (Mouse-ear cress).